Here is a 333-residue protein sequence, read N- to C-terminus: Electron transfer flavoprotein subunit alpha, mitochondrial (333 aa).

The N-terminal 19 residues, 1–19 (MFRAAAPGQLRRAASLLRF), are a transit peptide targeting the mitochondrion. The interval 20–204 (QSTLVIAEHA…EISEWLDQKL (185 aa)) is domain I. K59 bears the N6-acetyllysine; alternate mark. At K59 the chain carries N6-succinyllysine; alternate. An N6-acetyllysine modification is found at K62. K69 carries the post-translational modification N6-acetyllysine; alternate. Position 69 is an N6-succinyllysine; alternate (K69). The residue at position 75 (K75) is an N6-acetyllysine. K85 is subject to N6-acetyllysine; alternate. K85 carries the post-translational modification N6-succinyllysine; alternate. T93 carries the post-translational modification Phosphothreonine. N6-acetyllysine is present on residues K101 and K139. S140 carries the phosphoserine modification. N6-acetyllysine; alternate is present on K158. K158 is subject to N6-succinyllysine; alternate. N6-acetyllysine is present on K164. K187 bears the N6-succinyllysine mark. An N6-acetyllysine; alternate modification is found at K203. K203 bears the N6-succinyllysine; alternate mark. The tract at residues 205 to 333 (TKSDRPELTG…PEMTEILKKK (129 aa)) is domain II. K216 bears the N6-succinyllysine mark. Residue R223 participates in FAD binding. N6-acetyllysine; alternate occurs at positions 226 and 232. Residues K226 and K232 each carry the N6-succinyllysine; alternate modification. FAD-binding positions include S248, 263–266 (VGQT), 281–286 (SGAIQH), and N300. K301 is modified (N6-succinyllysine). 318 to 319 (DL) provides a ligand contact to FAD.

This sequence belongs to the ETF alpha-subunit/FixB family. As to quaternary structure, heterodimer composed of ETFA and ETFB. Identified in a complex that contains ETFA, ETFB and ETFRF1. Interaction with ETFRF1 promotes dissociation of the bound FAD and loss of electron transfer activity. Interacts with TASOR. Requires FAD as cofactor. The N-terminus is blocked.

It is found in the mitochondrion matrix. Its function is as follows. Heterodimeric electron transfer flavoprotein that accepts electrons from several mitochondrial dehydrogenases, including acyl-CoA dehydrogenases, glutaryl-CoA and sarcosine dehydrogenase. It transfers the electrons to the main mitochondrial respiratory chain via ETF-ubiquinone oxidoreductase (ETF dehydrogenase). Required for normal mitochondrial fatty acid oxidation and normal amino acid metabolism. The protein is Electron transfer flavoprotein subunit alpha, mitochondrial (ETFA) of Homo sapiens (Human).